The following is a 444-amino-acid chain: Sprouty-related, EVH1 domain-containing protein 1 (444 aa).

S2 carries the N-acetylserine modification. The WH1 domain occupies 6-123; that stretch reads ATSDNDNSYA…RGIRRAIEDI (118 aa). The disordered stretch occupies residues 123 to 151; it reads ISQGCPESKNEAEGADDLQANEEDSSSSL. Residues 135–147 are compositionally biased toward acidic residues; sequence EGADDLQANEEDS. N6-methyllysine is present on K224. One can recognise a KBD domain in the interval 233-285; sequence SIRHVSFQDEDEIVRINPRDILIRRYADYRHPDMWKNDLERDDADSSIQFSKP. 2 positions are modified to phosphoserine: S238 and S308. The interval 333-444 is required for interaction with TESK1; it reads SRCVYCQERF…CCGGKHKAAG (112 aa). Residues 334–442 form the SPR domain; it reads RCVYCQERFN…CGCCGGKHKA (109 aa).

Homodimer and heterodimer. Able to interact with SPRED2 to form heterodimers. Interacts (via C-terminus) with TAOK1/MARKK (via C-terminus); the interaction does not affect TAOK1 kinase activity. Interacts (via C-terminus) with TESK1 (via C-terminus); the interaction inhibits TESK1 kinase activity. Interacts with CAV1. Interacts with RAS. Interacts with palmitoyltransferase ZDHHC17/HIP14; the interaction leads to palmitoylation of SPRED1. Post-translationally, palmitoylated by ZDHHC17/HIP14. In terms of processing, phosphorylated on tyrosine. Ubiquitinated. As to expression, weakly expressed in embryonic cell line HEK293.

The protein localises to the cell membrane. The protein resides in the membrane. It localises to the caveola. It is found in the nucleus. Its function is as follows. Tyrosine kinase substrate that inhibits growth-factor-mediated activation of MAP kinase. Negatively regulates hematopoiesis of bone marrow. Inhibits fibroblast growth factor (FGF)-induced retinal lens fiber differentiation, probably by inhibiting FGF-mediated phosphorylation of ERK1/2. Attenuates actin stress fiber formation via inhibition of TESK1-mediated phosphorylation of cofilin. Inhibits TGFB-induced epithelial-to-mesenchymal transition in lens epithelial cells. The chain is Sprouty-related, EVH1 domain-containing protein 1 (SPRED1) from Homo sapiens (Human).